Consider the following 686-residue polypeptide: Secretin GspD 2 (686 aa).

The signal sequence occupies residues 1–40 (MFWRDITLSVWRKKTTGLKTKKRLLPLVLAAALCSSPVWA). The tract at residues 41–140 (EEATFTANFK…VGEGSDNYAG (100 aa)) is N0, contacts GspC2. Residues 142–206 (EMVTKVVPVR…EVIQRVDHAG (65 aa)) form an N1 region. Residues 207–279 (NRTEEVIPLD…LIRRLDSEME (73 aa)) are N2. Positions 282–357 (GNSQVFYLKY…SLQSVIEQLD (76 aa)) are N3. The interval 360-627 (RAQVHVEALI…VFIRPTILRD (268 aa)) is secretin. The interval 414-433 (PQKGSTVISENGATTINPDT) is cap gate. The tract at residues 629 to 686 (MAADGVSQRKYNYMRAEQIYRDEQGLSLMPHTAQPVLPAQNQALPPEVRAFLNAGRTR) is s domain, contacts AspS2.

Belongs to the bacterial secretin family. GSP D subfamily. As to quaternary structure, forms a cylindrical channel with 15 subunits, each of which interacts with the surrounding pilotin AspS2 proteins (also called GspS-beta). Interacts with inner cell membrane protein GspC2 in the periplasm. Forms multimers in the outer membrane. The isolated N0 domain forms dimers that self-assemble into rings.

Its subcellular location is the cell outer membrane. In terms of biological role, part of a type II secretion system (T2SS, formerly general secretion pathway, GSP) for the export of folded proteins across the outer membrane. This subunit forms the outer membrane channel. This is Secretin GspD 2 (gspD2) from Escherichia coli O78:H11 (strain H10407 / ETEC).